The primary structure comprises 177 residues: Acetyltransferase (177 aa).

In terms of domain architecture, N-acetyltransferase spans 4–174 (AQLRRVTAES…PTAIYFKTLG (171 aa)). Acetyl-CoA is bound by residues Glu27, 96–98 (LMV), 104–109 (GRGLGR), 130–131 (DT), and Tyr141.

In terms of biological role, renders tabtoxin-producing pathogens tolerant to their own phytotoxins. The sequence is that of Acetyltransferase (ttr) from Pseudomonas amygdali pv. tabaci (Pseudomonas syringae pv. tabaci).